A 65-amino-acid polypeptide reads, in one-letter code: Large ribosomal subunit protein bL35 (65 aa).

Residues 1-22 (MPKMKTKSSAKKRFKVTGSGKI) are disordered.

Belongs to the bacterial ribosomal protein bL35 family.

The protein is Large ribosomal subunit protein bL35 of Flavobacterium johnsoniae (strain ATCC 17061 / DSM 2064 / JCM 8514 / BCRC 14874 / CCUG 350202 / NBRC 14942 / NCIMB 11054 / UW101) (Cytophaga johnsonae).